A 428-amino-acid chain; its full sequence is Glutamate-1-semialdehyde 2,1-aminomutase (428 aa).

The residue at position 265 (K265) is an N6-(pyridoxal phosphate)lysine.

It belongs to the class-III pyridoxal-phosphate-dependent aminotransferase family. HemL subfamily. Homodimer. The cofactor is pyridoxal 5'-phosphate.

It localises to the cytoplasm. It carries out the reaction (S)-4-amino-5-oxopentanoate = 5-aminolevulinate. It functions in the pathway porphyrin-containing compound metabolism; protoporphyrin-IX biosynthesis; 5-aminolevulinate from L-glutamyl-tRNA(Glu): step 2/2. This is Glutamate-1-semialdehyde 2,1-aminomutase from Proteus mirabilis (strain HI4320).